A 105-amino-acid polypeptide reads, in one-letter code: N(4)-acetylcytidine amidohydrolase (105 aa).

An ASCH domain is found at 7–93 (TFFERFEHDI…VIAEIYPGLE (87 aa)). Catalysis depends on K21, which acts as the Proton acceptor. T24 functions as the Nucleophile in the catalytic mechanism. E74 serves as the catalytic Proton donor.

Belongs to the N(4)-acetylcytidine amidohydrolase family.

It carries out the reaction N(4)-acetylcytidine + H2O = cytidine + acetate + H(+). The catalysed reaction is N(4)-acetyl-2'-deoxycytidine + H2O = 2'-deoxycytidine + acetate + H(+). The enzyme catalyses N(4)-acetylcytosine + H2O = cytosine + acetate + H(+). In terms of biological role, catalyzes the hydrolysis of N(4)-acetylcytidine (ac4C). This chain is N(4)-acetylcytidine amidohydrolase, found in Shewanella baltica (strain OS195).